The chain runs to 241 residues: Protein GrpE (241 aa).

A compositionally biased stretch (basic and acidic residues) spans 28–49 (QNCQKEETQTTNKDNQKEDETF). The interval 28-78 (QNCQKEETQTTNKDNQKEDETFKNQPNKTKQTNTKQQKHLSKESSHQQITK) is disordered. Over residues 50–62 (KNQPNKTKQTNTK) the composition is skewed to low complexity.

This sequence belongs to the GrpE family. As to quaternary structure, homodimer.

It is found in the cytoplasm. In terms of biological role, participates actively in the response to hyperosmotic and heat shock by preventing the aggregation of stress-denatured proteins, in association with DnaK and GrpE. It is the nucleotide exchange factor for DnaK and may function as a thermosensor. Unfolded proteins bind initially to DnaJ; upon interaction with the DnaJ-bound protein, DnaK hydrolyzes its bound ATP, resulting in the formation of a stable complex. GrpE releases ADP from DnaK; ATP binding to DnaK triggers the release of the substrate protein, thus completing the reaction cycle. Several rounds of ATP-dependent interactions between DnaJ, DnaK and GrpE are required for fully efficient folding. This chain is Protein GrpE, found in Aster yellows witches'-broom phytoplasma (strain AYWB).